The chain runs to 487 residues: Fatty acid desaturase 2-like protein FADS2B (487 aa).

The span at 1–11 (MKLEEKLEHNE) shows a compositional bias: basic and acidic residues. Positions 1 to 20 (MKLEEKLEHNESLVGKSRPC) are disordered. Topologically, residues 1-175 (MKLEEKLEHN…AMNMFSANLR (175 aa)) are cytoplasmic. The 78-residue stretch at 62–139 (LNLYTWQEIQ…LKPLLIGELS (78 aa)) folds into the Cytochrome b5 heme-binding domain. Positions 97 and 120 each coordinate heme. A helical membrane pass occupies residues 176 to 196 (FFFLHLAQILILEISAWLILH). The Lumenal portion of the chain corresponds to 197–201 (HFGSS). Residues 202–222 (WLVTILISFLLTVSQAQCSFL) form a helical membrane-spanning segment. Topologically, residues 223 to 307 (QHDLGHLSMF…IKYIDYEKQH (85 aa)) are cytoplasmic. The Histidine box-1 signature appears at 224–228 (HDLGH). A Histidine box-2 motif is present at residues 261–265 (HFQHH). A helical membrane pass occupies residues 308 to 328 (LYFYMVALPFLMPVYFNLQSM). Residues 329-349 (QVMYLRKYWMDIAWVSSFYIR) are Lumenal-facing. Residues 350 to 370 (YFITFGPFYGIFGTVLLIYLV) form a helical membrane-spanning segment. Residues 371 to 487 (KFIESPWIAY…ASLWMNAYYE (117 aa)) lie on the Cytoplasmic side of the membrane. Residues 426 to 430 (QIEHH) carry the Histidine box-3 motif.

Belongs to the fatty acid desaturase type 1 family.

The protein localises to the endoplasmic reticulum membrane. Its pathway is lipid metabolism; polyunsaturated fatty acid biosynthesis. The protein is Fatty acid desaturase 2-like protein FADS2B of Mus musculus (Mouse).